A 403-amino-acid chain; its full sequence is L-alanine/L-glutamate racemase (403 aa).

Pyridoxal 5'-phosphate-binding positions include 62-64 (YSN), 92-93 (GL), and 209-211 (AVT). Residue K212 is modified to N6-(pyridoxal phosphate)lysine.

It belongs to the trans-sulfuration enzymes family. Homotetramer; dimer of active dimers. It depends on pyridoxal 5'-phosphate as a cofactor.

The enzyme catalyses L-alanine = D-alanine. The catalysed reaction is L-glutamate = D-glutamate. It catalyses the reaction L,L-cystathionine + H2O = L-homocysteine + pyruvate + NH4(+). It functions in the pathway cell wall biogenesis; peptidoglycan biosynthesis. Functionally, catalyzes the racemization of L-alanine to D-alanine, and of L-glutamate to D-glutamate. The activity is low, but likely physiological since W.pipientis wMel lacks canonical alr and murI genes, while D-alanine and D-glutamate are essential components of peptidoglycan. Also displays a vestigial cystathionine beta-lyase (CBL) activity, cleaving cystathionine to homocysteine and pyruvate; however, this reaction seems not to be physiologically relevant since the only met gene in the genome of this obligately intracellular parasitic bacterium is metC, demonstrating that it is a methionine auxotroph. This is L-alanine/L-glutamate racemase from Wolbachia pipientis wMel.